A 103-amino-acid chain; its full sequence is c-Myc-binding protein (103 aa).

It belongs to the AMY1 family. Binds via its C-terminal region to the N-terminal region of MYC. Associates with AKAP1/S-AKAP84. Interacts with MYCBPAP. Interacts with CFAP91.

Its subcellular location is the cytoplasm. The protein localises to the nucleus. May control the transcriptional activity of MYC. Stimulates the activation of E box-dependent transcription by MYC. The protein is c-Myc-binding protein (MYCBP) of Bos taurus (Bovine).